The following is an 88-amino-acid chain: MAVVLRLSRAGTHKAPFYHVVATDSRNARDGKYLEDVGIYDPTKRPERIELKVERIEHWLKAGAKPSQTVAMILKRAAKAAAPAAPKA.

It belongs to the bacterial ribosomal protein bS16 family.

This Anaeromyxobacter dehalogenans (strain 2CP-1 / ATCC BAA-258) protein is Small ribosomal subunit protein bS16.